The following is a 400-amino-acid chain: Enoyl-[acyl-carrier-protein] reductase [NADH] (400 aa).

NAD(+) contacts are provided by residues 48–53 (GASTGY), 74–75 (FE), 111–112 (DA), and 139–140 (LA). Residue Tyr-225 coordinates substrate. Catalysis depends on Tyr-235, which acts as the Proton donor. Residues Lys-244 and 273 to 275 (VVT) each bind NAD(+).

The protein belongs to the TER reductase family. In terms of assembly, monomer.

The catalysed reaction is a 2,3-saturated acyl-[ACP] + NAD(+) = a (2E)-enoyl-[ACP] + NADH + H(+). It functions in the pathway lipid metabolism; fatty acid biosynthesis. Its function is as follows. Involved in the final reduction of the elongation cycle of fatty acid synthesis (FAS II). Catalyzes the reduction of a carbon-carbon double bond in an enoyl moiety that is covalently linked to an acyl carrier protein (ACP). In Burkholderia ambifaria (strain MC40-6), this protein is Enoyl-[acyl-carrier-protein] reductase [NADH].